The sequence spans 89 residues: Putative regulatory protein RBAM_015500 (89 aa).

It belongs to the RemA family.

The sequence is that of Putative regulatory protein RBAM_015500 from Bacillus velezensis (strain DSM 23117 / BGSC 10A6 / LMG 26770 / FZB42) (Bacillus amyloliquefaciens subsp. plantarum).